The sequence spans 439 residues: MDHLAHYYHAHIDELNRRVAEIVSREALSGLVIHSGQPHRMFLDDINYPFKANPHFKAWLPVLDNPNCWLVVNGRDKPQLIFYRPVDFWHKVADVPDMFWTEHFDIKLLTKADKVAELLPTDIANWAYLGEHLDVAEVLGFTSRNPDSVMSYLHFHRTTKTEYELECMRRANQIAVQGHQAAKNAFYNGASEFEIQQQYLSAVGQGENEVPYGNIIALNQNAAILHYTALEHQNPARRLSFLIDAGASYFGYASDITRTYAFEKNRFDELITAMNKAQLELIDMMRPGVRYPDLHLATHGKVAQMLLDFDLATGDAQGLVEQGITSAFFPHGLGHMLGLQVHDVGGFAFDERGTHIPAPEAHPFLRCTRILAPNQVLTMEPGLYIIDSLLNELKQNSRGKQINWNSVDELRPFGGIRIEDNVVVHQDRNENMTRELGLA.

5 residues coordinate Mn(2+): Asp-244, Asp-255, His-335, Glu-380, and Glu-419.

It belongs to the peptidase M24B family. Bacterial-type prolidase subfamily. It depends on Mn(2+) as a cofactor.

It catalyses the reaction Xaa-L-Pro dipeptide + H2O = an L-alpha-amino acid + L-proline. In terms of biological role, splits dipeptides with a prolyl residue in the C-terminal position. In Shewanella oneidensis (strain ATCC 700550 / JCM 31522 / CIP 106686 / LMG 19005 / NCIMB 14063 / MR-1), this protein is Xaa-Pro dipeptidase.